The sequence spans 128 residues: Small ribosomal subunit protein uS12 (128 aa).

Residue Asp89 is modified to 3-methylthioaspartic acid. A disordered region spans residues 101 to 128 (SLDTSGVADRRQGRSKYGAKRPKGAAAK). The segment covering 113–128 (GRSKYGAKRPKGAAAK) has biased composition (basic residues).

It belongs to the universal ribosomal protein uS12 family. As to quaternary structure, part of the 30S ribosomal subunit. Contacts proteins S8 and S17. May interact with IF1 in the 30S initiation complex.

Its function is as follows. With S4 and S5 plays an important role in translational accuracy. In terms of biological role, interacts with and stabilizes bases of the 16S rRNA that are involved in tRNA selection in the A site and with the mRNA backbone. Located at the interface of the 30S and 50S subunits, it traverses the body of the 30S subunit contacting proteins on the other side and probably holding the rRNA structure together. The combined cluster of proteins S8, S12 and S17 appears to hold together the shoulder and platform of the 30S subunit. This chain is Small ribosomal subunit protein uS12, found in Prosthecochloris aestuarii (strain DSM 271 / SK 413).